Reading from the N-terminus, the 292-residue chain is Phosphatidylglycerol--prolipoprotein diacylglyceryl transferase (292 aa).

A run of 4 helical transmembrane segments spans residues 18 to 38, 67 to 87, 105 to 125, and 129 to 149; these read LFGA…GLLI, LLTW…VLFY, GGMS…AFCL, and ISIL…LFLG. R150 contacts a 1,2-diacyl-sn-glycero-3-phospho-(1'-sn-glycerol). 3 consecutive transmembrane segments (helical) span residues 193-213, 222-242, and 266-286; these read QLYE…ILIW, GAVT…VEFV, and GLTM…YFML.

It belongs to the Lgt family.

The protein localises to the cell inner membrane. The enzyme catalyses L-cysteinyl-[prolipoprotein] + a 1,2-diacyl-sn-glycero-3-phospho-(1'-sn-glycerol) = an S-1,2-diacyl-sn-glyceryl-L-cysteinyl-[prolipoprotein] + sn-glycerol 1-phosphate + H(+). Its pathway is protein modification; lipoprotein biosynthesis (diacylglyceryl transfer). Catalyzes the transfer of the diacylglyceryl group from phosphatidylglycerol to the sulfhydryl group of the N-terminal cysteine of a prolipoprotein, the first step in the formation of mature lipoproteins. The chain is Phosphatidylglycerol--prolipoprotein diacylglyceryl transferase from Cereibacter sphaeroides (strain ATCC 17025 / ATH 2.4.3) (Rhodobacter sphaeroides).